A 75-amino-acid chain; its full sequence is Putative membrane protein insertion efficiency factor (75 aa).

Belongs to the UPF0161 family.

It localises to the cell inner membrane. In terms of biological role, could be involved in insertion of integral membrane proteins into the membrane. The sequence is that of Putative membrane protein insertion efficiency factor from Leptospira biflexa serovar Patoc (strain Patoc 1 / ATCC 23582 / Paris).